Here is a 333-residue protein sequence, read N- to C-terminus: Electron transfer flavoprotein subunit alpha, mitochondrial (333 aa).

The N-terminal 19 residues, 1 to 19 (MFRAAAPGQLRRAASLLRF), are a transit peptide targeting the mitochondrion. The domain I stretch occupies residues 20–204 (QSTLVIAEHA…GISEWLDQKL (185 aa)). Lys59 bears the N6-acetyllysine; alternate mark. Lys59 carries the N6-succinyllysine; alternate modification. Lys62 is subject to N6-acetyllysine. Lys69 is subject to N6-acetyllysine; alternate. Lys69 is modified (N6-succinyllysine; alternate). Lys75 carries the post-translational modification N6-acetyllysine. The residue at position 85 (Lys85) is an N6-acetyllysine; alternate. An N6-succinyllysine; alternate modification is found at Lys85. Position 93 is a phosphothreonine (Thr93). Residues Lys101 and Lys139 each carry the N6-acetyllysine modification. Ser140 carries the phosphoserine modification. Lys158 carries the N6-acetyllysine; alternate modification. Position 158 is an N6-succinyllysine; alternate (Lys158). Residue Lys164 is modified to N6-acetyllysine. Position 187 is an N6-succinyllysine (Lys187). Lys203 is subject to N6-acetyllysine; alternate. Lys203 is subject to N6-succinyllysine; alternate. Residues 205–333 (TKSDRPELTG…PEMTEILKKK (129 aa)) are domain II. Lys216 bears the N6-succinyllysine mark. Arg223 contacts FAD. N6-acetyllysine; alternate is present on residues Lys226 and Lys232. Lys226 and Lys232 each carry N6-succinyllysine; alternate. Residues Ser248, 263-266 (VGQT), 281-286 (SGAIQH), and Asn300 contribute to the FAD site. Lys301 is modified (N6-succinyllysine). 318 to 319 (DL) is a binding site for FAD.

The protein belongs to the ETF alpha-subunit/FixB family. Heterodimer composed of ETFA and ETFB. Identified in a complex that contains ETFA, ETFB and ETFRF1. Interaction with ETFRF1 promotes dissociation of the bound FAD and loss of electron transfer activity. Interacts with TASOR. It depends on FAD as a cofactor.

It localises to the mitochondrion matrix. Heterodimeric electron transfer flavoprotein that accepts electrons from several mitochondrial dehydrogenases, including acyl-CoA dehydrogenases, glutaryl-CoA and sarcosine dehydrogenase. It transfers the electrons to the main mitochondrial respiratory chain via ETF-ubiquinone oxidoreductase (ETF dehydrogenase). Required for normal mitochondrial fatty acid oxidation and normal amino acid metabolism. In Rattus norvegicus (Rat), this protein is Electron transfer flavoprotein subunit alpha, mitochondrial (Etfa).